The chain runs to 315 residues: Acetyl-coenzyme A carboxylase carboxyl transferase subunit alpha (315 aa).

In terms of domain architecture, CoA carboxyltransferase C-terminal spans 36-289 (LSKKRLELME…RKAVAAELKI (254 aa)).

It belongs to the AccA family. In terms of assembly, acetyl-CoA carboxylase is a heterohexamer composed of biotin carboxyl carrier protein (AccB), biotin carboxylase (AccC) and two subunits each of ACCase subunit alpha (AccA) and ACCase subunit beta (AccD).

Its subcellular location is the cytoplasm. It carries out the reaction N(6)-carboxybiotinyl-L-lysyl-[protein] + acetyl-CoA = N(6)-biotinyl-L-lysyl-[protein] + malonyl-CoA. Its pathway is lipid metabolism; malonyl-CoA biosynthesis; malonyl-CoA from acetyl-CoA: step 1/1. Component of the acetyl coenzyme A carboxylase (ACC) complex. First, biotin carboxylase catalyzes the carboxylation of biotin on its carrier protein (BCCP) and then the CO(2) group is transferred by the carboxyltransferase to acetyl-CoA to form malonyl-CoA. This chain is Acetyl-coenzyme A carboxylase carboxyl transferase subunit alpha, found in Francisella tularensis subsp. tularensis (strain FSC 198).